The following is a 487-amino-acid chain: Acetyl-coenzyme A carboxylase carboxyl transferase subunit beta, chloroplastic (487 aa).

The region spanning 223–487 (LWIQCDNCYG…FCPLNKTEIK (265 aa)) is the CoA carboxyltransferase N-terminal domain. Zn(2+) contacts are provided by Cys227, Cys230, Cys243, and Cys246. Residues 227 to 246 (CDNCYGLMYKKVKMNVCEQC) form a C4-type zinc finger.

This sequence belongs to the AccD/PCCB family. In terms of assembly, acetyl-CoA carboxylase is a heterohexamer composed of biotin carboxyl carrier protein, biotin carboxylase and 2 subunits each of ACCase subunit alpha and ACCase plastid-coded subunit beta (accD). Requires Zn(2+) as cofactor.

Its subcellular location is the plastid. It is found in the chloroplast stroma. It catalyses the reaction N(6)-carboxybiotinyl-L-lysyl-[protein] + acetyl-CoA = N(6)-biotinyl-L-lysyl-[protein] + malonyl-CoA. Its pathway is lipid metabolism; malonyl-CoA biosynthesis; malonyl-CoA from acetyl-CoA: step 1/1. Its function is as follows. Component of the acetyl coenzyme A carboxylase (ACC) complex. Biotin carboxylase (BC) catalyzes the carboxylation of biotin on its carrier protein (BCCP) and then the CO(2) group is transferred by the transcarboxylase to acetyl-CoA to form malonyl-CoA. This Nasturtium officinale (Watercress) protein is Acetyl-coenzyme A carboxylase carboxyl transferase subunit beta, chloroplastic.